We begin with the raw amino-acid sequence, 945 residues long: Isoleucine--tRNA ligase (945 aa).

The short motif at 66-76 is the 'HIGH' region element; the sequence is PYANGDIHLGH. L-isoleucyl-5'-AMP is bound at residue Glu581. Residues 622-626 carry the 'KMSKS' region motif; that stretch reads KMSKS. ATP is bound at residue Lys625. Residues Cys908, Cys911, Cys928, and Cys931 each contribute to the Zn(2+) site.

Belongs to the class-I aminoacyl-tRNA synthetase family. IleS type 1 subfamily. In terms of assembly, monomer. Zn(2+) is required as a cofactor.

It is found in the cytoplasm. The catalysed reaction is tRNA(Ile) + L-isoleucine + ATP = L-isoleucyl-tRNA(Ile) + AMP + diphosphate. Its function is as follows. Catalyzes the attachment of isoleucine to tRNA(Ile). As IleRS can inadvertently accommodate and process structurally similar amino acids such as valine, to avoid such errors it has two additional distinct tRNA(Ile)-dependent editing activities. One activity is designated as 'pretransfer' editing and involves the hydrolysis of activated Val-AMP. The other activity is designated 'posttransfer' editing and involves deacylation of mischarged Val-tRNA(Ile). This Burkholderia cenocepacia (strain ATCC BAA-245 / DSM 16553 / LMG 16656 / NCTC 13227 / J2315 / CF5610) (Burkholderia cepacia (strain J2315)) protein is Isoleucine--tRNA ligase.